The chain runs to 61 residues: Large ribosomal subunit protein uL30 (61 aa).

This sequence belongs to the universal ribosomal protein uL30 family. In terms of assembly, part of the 50S ribosomal subunit.

The polypeptide is Large ribosomal subunit protein uL30 (Bifidobacterium longum (strain DJO10A)).